A 139-amino-acid chain; its full sequence is ATP synthase epsilon chain (139 aa).

The disordered stretch occupies residues 89-110 (EARAEQARAEAEARRREAQSEH).

Belongs to the ATPase epsilon chain family. F-type ATPases have 2 components, CF(1) - the catalytic core - and CF(0) - the membrane proton channel. CF(1) has five subunits: alpha(3), beta(3), gamma(1), delta(1), epsilon(1). CF(0) has three main subunits: a, b and c.

It localises to the cell membrane. Produces ATP from ADP in the presence of a proton gradient across the membrane. This Chloroflexus aggregans (strain MD-66 / DSM 9485) protein is ATP synthase epsilon chain.